A 1906-amino-acid chain; its full sequence is Zinc metalloprotease ZmpB (1906 aa).

Residues 1–33 (MFKKDRFSIRKIKGVVGSVFLGSLLMAPSVVDA) form the signal peptide. A propeptide spanning residues 34-76 (ATYHYVNKEIISQEAKDLIQTGKPDRNEVVYGLVYQKDQLPQT) is cleaved from the precursor. The LPXTG sorting signal motif lies at 73 to 77 (LPQTG). Threonine 76 bears the Pentaglycyl murein peptidoglycan amidated threonine mark. Transmembrane regions (helical) follow at residues 77–98 (GTEA…LLIY) and 105–127 (SVFL…DPVA). At 128–1906 (TLALASREGV…TNSFKTSIFK (1779 aa)) the chain is on the extracellular side. The tract at residues 178–436 (VETPQSITNQ…KASSVSPTDY (259 aa)) is disordered. Residues 181–196 (PQSITNQEQARTENQV) are compositionally biased toward polar residues. Basic and acidic residues-rich tracts occupy residues 201–239 (EAPK…KEDS), 252–262 (VESKPEEKVAV), 271–335 (KPAE…KEET), 352–375 (KQTE…REDE), and 383–408 (EPEK…DKIK). A run of 4 repeats spans residues 277-291 (KVEQ…REDE), 293-315 (APVE…ETPK), 361-375 (KVEQ…REDE), and 380-402 (APVE…ETPK). The 2 X 15 AA repeats of K-V-E-Q-A-G-E-P-V-A-P-R-E-D-E stretch occupies residues 277 to 375 (KVEQAGEPVA…GEPVAPREDE (99 aa)). Positions 293–375 (APVEPEKQPE…GEPVAPREDE (83 aa)) are 2 X 23 AA approximate repeats. The span at 421-436 (LNNQIDKASSVSPTDY) shows a compositional bias: polar residues. Position 1562 (histidine 1562) interacts with Zn(2+). The active site involves glutamate 1563. Positions 1566 and 1586 each coordinate Zn(2+).

The protein belongs to the peptidase M26 family. It depends on Zn(2+) as a cofactor. The Gram-positive cell-wall anchor motif LPXTG is located in the N-terminal part, in contrast to such motifs in other known streptococcal and staphylococcal proteins. The protease could be cleaved by the sortase and anchored in the membrane via the two potential N-terminal transmembrane domains, whereas the propeptide located prior to the LPXTG motif would remain attached to the cell wall peptidoglycan by an amide bond.

Its subcellular location is the secreted. The protein resides in the cell wall. It localises to the membrane. Is a virulence factor capable of inducing inflammation in the lower respiratory tract, by increasing tumor necrosis factor alpha (TNF-alpha) concentration in the lungs. Also appears to have other functions important in virulence in models of pneumonia and septicemia. This is Zinc metalloprotease ZmpB (zmpB) from Streptococcus pneumoniae serotype 4 (strain ATCC BAA-334 / TIGR4).